Consider the following 287-residue polypeptide: Hydroxysteroid 11-beta-dehydrogenase 1-like protein (287 aa).

Residues 1–20 form the signal peptide; sequence MMKPFGKVLCAAGSLAVLLA. NADP(+) is bound by residues 41–67, 92–93, and 119–121; these read GASAGIGEQMAYHYATFGAEIVLTARR, DM, and NHI. S170 provides a ligand contact to substrate. Y183 (proton acceptor) is an active-site residue. Residues 183–187 and 216–222 contribute to the NADP(+) site; these read YSATK and GLIDTDA.

The protein belongs to the short-chain dehydrogenases/reductases (SDR) family.

Its subcellular location is the secreted. The catalysed reaction is cortisone + NADPH + H(+) = cortisol + NADP(+). Unidirectional NADP(+)-dependent cortisol dehydrogenase (in vitro). This is Hydroxysteroid 11-beta-dehydrogenase 1-like protein (HSD11B1L) from Gallus gallus (Chicken).